The chain runs to 125 residues: Histone H2A, orphon (125 aa).

A compositionally biased stretch (basic residues) spans 1–18 (MSGRGKGGKVKAKAKSRS). The segment at 1 to 21 (MSGRGKGGKVKAKAKSRSSRA) is disordered. Residue Ser-2 is modified to N-acetylserine. Position 2 is a phosphoserine (Ser-2). Residue Lys-119 forms a Glycyl lysine isopeptide (Lys-Gly) (interchain with G-Cter in ubiquitin) linkage.

Belongs to the histone H2A family. In terms of assembly, the nucleosome is a histone octamer containing two molecules each of H2A, H2B, H3 and H4 assembled in one H3-H4 heterotetramer and two H2A-H2B heterodimers. The octamer wraps approximately 147 bp of DNA. Monoubiquitination of Lys-119 gives a specific tag for epigenetic transcriptional repression. Post-translationally, phosphorylation on Ser-2 is enhanced during mitosis. Phosphorylation on Ser-2 directly represses transcription.

The protein resides in the nucleus. Its subcellular location is the chromosome. Core component of nucleosome. Nucleosomes wrap and compact DNA into chromatin, limiting DNA accessibility to the cellular machineries which require DNA as a template. Histones thereby play a central role in transcription regulation, DNA repair, DNA replication and chromosomal stability. DNA accessibility is regulated via a complex set of post-translational modifications of histones, also called histone code, and nucleosome remodeling. This Chironomus thummi thummi (Midge) protein is Histone H2A, orphon.